The sequence spans 95 residues: MATIFIVFVSFGCVFVLGIAAFVLCCLIKKWKCSKAIEKNEMVHVDQHLQVHENILQGPNGMKTVAITVDDDLHVHDEEECVKNEKLGTASTSKA.

Residues 1–3 lie on the Extracellular side of the membrane; the sequence is MAT. A helical membrane pass occupies residues 4–24; it reads IFIVFVSFGCVFVLGIAAFVL. Topologically, residues 25 to 95 are cytoplasmic; that stretch reads CCLIKKWKCS…KLGTASTSKA (71 aa).

As to quaternary structure, interacts with the secondary cell wall (SCW)-related cellulose synthase complex. In terms of tissue distribution, accumulates in cells differentiating into tracheary element (TE) which undergo secondary cell wall (SCW) formation.

Its subcellular location is the cell membrane. The protein localises to the secreted. It localises to the cell wall. Involved in the secondary cell wall (SCW) formation of vessel elements (e.g. protoxylem and metaxylem), thus promoting tracheary element (TE) differentiation. This is Protein TRACHEARY ELEMENT DIFFERENTIATION-RELATED 6 from Zinnia elegans (Garden zinnia).